We begin with the raw amino-acid sequence, 210 residues long: Methylthioribulose-1-phosphate dehydratase (210 aa).

2 residues coordinate Zn(2+): histidine 97 and histidine 99.

The protein belongs to the aldolase class II family. MtnB subfamily. As to quaternary structure, homotetramer. Zn(2+) serves as cofactor.

The enzyme catalyses 5-(methylsulfanyl)-D-ribulose 1-phosphate = 5-methylsulfanyl-2,3-dioxopentyl phosphate + H2O. Its pathway is amino-acid biosynthesis; L-methionine biosynthesis via salvage pathway; L-methionine from S-methyl-5-thio-alpha-D-ribose 1-phosphate: step 2/6. Catalyzes the dehydration of methylthioribulose-1-phosphate (MTRu-1-P) into 2,3-diketo-5-methylthiopentyl-1-phosphate (DK-MTP-1-P). The sequence is that of Methylthioribulose-1-phosphate dehydratase from Geobacillus kaustophilus (strain HTA426).